The primary structure comprises 392 residues: Putative purine permease 19 (392 aa).

A compositionally biased stretch (basic and acidic residues) spans 1–16 (MGFHTKSPDRVTHEEE). The interval 1 to 29 (MGFHTKSPDRVTHEEEANIGVDNQPRETT) is disordered. The residue at position 30 (Ser-30) is a Phosphoserine. Transmembrane regions (helical) follow at residues 46-66 (ICIFVCSCLVVAGRVLSTLLL), 88-108 (WLQSMVQNAAFPFTAFLLLLW), 128-148 (LFLLYISLGVLFAAYSQLYAI), 154-174 (VFFLWIFTSQLIFTSIFTTII), 182-202 (WIILSMVLSGAATGLGITSSG), 220-240 (WCAFFGTVAFSLSLCIMQLGF), 254-274 (VILMQTNASMIATLICLVGLF), 300-320 (LIGLSLAWQVMSLGLVGLVCL), 325-345 (FSNVVSFCSTPLVNILLVLAF), and 354-374 (FFKEGALVAGILGFASYVYSL).

Belongs to the purine permeases (TC 2.A.7.14) family.

The protein resides in the membrane. This chain is Putative purine permease 19 (PUP19), found in Arabidopsis thaliana (Mouse-ear cress).